A 467-amino-acid polypeptide reads, in one-letter code: uncharacterized protein (467 aa).

Sel1-like repeat units follow at residues 38-73 (PAAAFELAKHLMDADSPYQDREQGMEMLRIAAEQGH), 107-138 (PEAQVRLMYLLYASRHFEEALEWAKTSAKNNN), 139-172 (PHGQYLLAQYCRYGTPPDFETAHLLYRKSAAQGL), 173-208 (PEAHWQLGLQYRFGQGTKVDTAQAVNHLRAAAQQGY), 240-275 (PDAHAALADIYLQGKHLERNHKLALHHAEAAAAERH), 276-311 (PEGLRILGDICRYGLGIAPDTEKARHYYRQAAEAGS), 343-378 (AERLYQKAQALHYGLQCAPEYAAALKLYTEAAELGH), 379-414 (SKAQTNLGSMYYFGQGMTADYNEARKWFEKAAAKKD), and 415-450 (SMAFYNLACIHYSGHGVEPDKEKACRYLQEAINNGY).

This is an uncharacterized protein from Neisseria meningitidis serogroup B (strain ATCC BAA-335 / MC58).